Reading from the N-terminus, the 508-residue chain is Photosystem II CP47 reaction center protein (508 aa).

6 consecutive transmembrane segments (helical) span residues 21 to 36 (AVHIMHTALVSGWAGS), 101 to 115 (IVFSGLCFLAAIWHW), 140 to 156 (GIHLFLAGVACFGFGAF), 203 to 218 (IAAGTLGILAGLFHLS), 237 to 252 (VLSSSIAAVFFAAFVV), and 457 to 472 (TFALLFFFGHIWHGAR).

Belongs to the PsbB/PsbC family. PsbB subfamily. PSII is composed of 1 copy each of membrane proteins PsbA, PsbB, PsbC, PsbD, PsbE, PsbF, PsbH, PsbI, PsbJ, PsbK, PsbL, PsbM, PsbT, PsbX, PsbY, PsbZ, Psb30/Ycf12, at least 3 peripheral proteins of the oxygen-evolving complex and a large number of cofactors. It forms dimeric complexes. Requires Binds multiple chlorophylls. PSII binds additional chlorophylls, carotenoids and specific lipids. as cofactor.

Its subcellular location is the plastid. The protein resides in the chloroplast thylakoid membrane. In terms of biological role, one of the components of the core complex of photosystem II (PSII). It binds chlorophyll and helps catalyze the primary light-induced photochemical processes of PSII. PSII is a light-driven water:plastoquinone oxidoreductase, using light energy to abstract electrons from H(2)O, generating O(2) and a proton gradient subsequently used for ATP formation. This chain is Photosystem II CP47 reaction center protein, found in Triticum aestivum (Wheat).